A 387-amino-acid chain; its full sequence is Phosphoglycerate kinase (387 aa).

Substrate is bound by residues 21–23 (DLN), Arg36, 59–62 (HLGR), Arg113, and Arg146. ATP is bound by residues Lys197, Glu314, and 340–343 (GGDT).

This sequence belongs to the phosphoglycerate kinase family. In terms of assembly, monomer.

The protein resides in the cytoplasm. The catalysed reaction is (2R)-3-phosphoglycerate + ATP = (2R)-3-phospho-glyceroyl phosphate + ADP. It participates in carbohydrate degradation; glycolysis; pyruvate from D-glyceraldehyde 3-phosphate: step 2/5. The chain is Phosphoglycerate kinase from Yersinia pestis bv. Antiqua (strain Antiqua).